Consider the following 749-residue polypeptide: Transcription factor RFX3 (749 aa).

Positions 183 to 258 (HLQWLLDNYE…YHYYGIRVKP (76 aa)) form a DNA-binding region, RFX-type winged-helix. A disordered region spans residues 663–699 (VSPGNLDKDEGSEVESETDEDLDDSSEPRAKREKTEL). Residues 674–687 (SEVESETDEDLDDS) show a composition bias toward acidic residues. Residues 688–698 (SEPRAKREKTE) are compositionally biased toward basic and acidic residues.

Belongs to the RFX family. In terms of assembly, heterodimer; heterodimerizes with RFX1 and RFX2, and RFX6. In terms of tissue distribution, expressed in ciliated cells of the node and in the ciliated ependymal cells of the subcommissural organ (SCO), choroid plexuses (CP) and ventricular walls during embryonic and postnatal development. Expressed in developing and mature pancreatic endocrine cells during embryogenesis and in adults (at protein level).

It localises to the nucleus. Functionally, transcription factor required for ciliogenesis and islet cell differentiation during endocrine pancreas development. Essential for the differentiation of nodal monocilia and left-right asymmetry specification during embryogenesis. Required for the biogenesis of motile cilia by governing growth and beating efficiency of motile cells. Also required for ciliated ependymal cell differentiation. Together with RFX6, participates in the differentiation of 4 of the 5 islet cell types during endocrine pancreas development, with the exception of pancreatic PP (polypeptide-producing) cells. Regulates transcription by forming a heterodimer with another RFX protein and binding to the X-box in the promoter of target genes. Regulates the expression of genes involved in ciliary assembly (DYNC2LI1, FOXJ1 and BBS4) and genes involved in ciliary motility (DNAH11, DNAH9 and DNAH5). Represses transcription of MAP1A in non-neuronal cells but not in neuronal cells. The chain is Transcription factor RFX3 (Rfx3) from Mus musculus (Mouse).